The chain runs to 1012 residues: Centriole and centriolar satellite protein OFD1 (1012 aa).

In terms of domain architecture, LisH spans 70–102; it reads LIGASNSLVADHLQRCGYEYSLSVFFPESGLAK. 2 coiled-coil regions span residues 189–557 and 622–662; these read QRIK…ENEV and DSDL…NSAK. A mediates homooligomerization region spans residues 609–665; that stretch reads TNYPTAWVEGSSPDSDLEFVANTKARVKELQQEAERLEKAFRSYHRRVIKNSAKSPL. The segment at 615–1012 is mediates the interaction with SDCCAG8; that stretch reads WVEGSSPDSD…FSHEELDDSW (398 aa). Ser663, Ser669, Ser686, and Ser720 each carry phosphoserine. The interval 719–744 is disordered; that stretch reads GSAASRLRGGTSSRRLSSTPLPKAKR. The segment covering 720 to 737 has biased composition (low complexity); sequence SAASRLRGGTSSRRLSST. Phosphoserine; by PKA is present on Ser735. Residues Ser745, Ser774, Ser789, and Ser811 each carry the phosphoserine modification. Positions 757–794 are disordered; it reads RSHIASPSPCPDRMPLPSPTESRHSLSIPPVSSPPEQK. The span at 764–774 shows a compositional bias: pro residues; the sequence is SPCPDRMPLPS. Disordered stretches follow at residues 824–904 and 963–1012; these read FESS…LQEV and KIIQ…DDSW. Positions 867-956 form a coiled coil; sequence SVDQKQIEEQ…IKDKSAHSEN (90 aa). 2 stretches are compositionally biased toward basic and acidic residues: residues 871–904 and 973–982; these read KQIE…LQEV and SADKSSKKMV.

The protein belongs to the OFD1 family. In terms of assembly, homooligomer. Interacts with LCA5. Interacts with RUVBL1; the interaction is direct and may mediate interaction with the NuA4 histone acetyltransferase complex. Interacts with SDCCAG8; the interaction is direct. Interacts with MAP1LC3B. Interacts with C2CD3; OFD1 may act as a negative regulator of C2CD3. Forms a complex with KIAA0753/OFIP and CEP20/FOR20; the interaction with CEP20 is detected only in the presence of KIAA0753. Interacts with PCM1; this interaction may be mediated by KIAA0753/OFIP. Interacts with TBC1D31; regulates OFD1 activity in cilium assembly. In terms of processing, phosphorylated. Phosphorylation at Ser-735, by the cAMP-dependent protein kinase PKA, triggers ubiquitination and proteasomal degradation of OFD1. Also increases its interaction with TBC1D31 and regulates its function in ciliogenesis. Post-translationally, ubiquitinated by PJA2, upon phosphorylation at Ser-735 by PKA, leads to the proteasomal degradation of OFD1. As to expression, widely expressed. Expressed in 9 and 14 weeks old embryos in metanephric mesenchyme, oral mucosa, lung, heart, nasal and cranial cartilage, and brain. Expressed in metanephros, brain, tongue, and limb.

The protein resides in the cytoplasm. The protein localises to the cytoskeleton. It is found in the microtubule organizing center. It localises to the centrosome. Its subcellular location is the centriole. The protein resides in the cilium basal body. The protein localises to the nucleus. It is found in the centriolar satellite. Component of the centrioles controlling mother and daughter centrioles length. Recruits to the centriole IFT88 and centriole distal appendage-specific proteins including CEP164. Involved in the biogenesis of the cilium, a centriole-associated function. The cilium is a cell surface projection found in many vertebrate cells required to transduce signals important for development and tissue homeostasis. Plays an important role in development by regulating Wnt signaling and the specification of the left-right axis. Only OFD1 localized at the centriolar satellites is removed by autophagy, which is an important step in the ciliogenesis regulation. The protein is Centriole and centriolar satellite protein OFD1 (OFD1) of Homo sapiens (Human).